Here is a 601-residue protein sequence, read N- to C-terminus: Elongation factor 4 (601 aa).

A tr-type G domain is found at Asp-7–Lys-189. GTP-binding positions include Asp-19–Thr-24 and Asn-136–Asp-139.

This sequence belongs to the TRAFAC class translation factor GTPase superfamily. Classic translation factor GTPase family. LepA subfamily.

Its subcellular location is the cell inner membrane. It carries out the reaction GTP + H2O = GDP + phosphate + H(+). Required for accurate and efficient protein synthesis under certain stress conditions. May act as a fidelity factor of the translation reaction, by catalyzing a one-codon backward translocation of tRNAs on improperly translocated ribosomes. Back-translocation proceeds from a post-translocation (POST) complex to a pre-translocation (PRE) complex, thus giving elongation factor G a second chance to translocate the tRNAs correctly. Binds to ribosomes in a GTP-dependent manner. This Methylobacterium nodulans (strain LMG 21967 / CNCM I-2342 / ORS 2060) protein is Elongation factor 4.